The following is a 95-amino-acid chain: Aspartyl/glutamyl-tRNA(Asn/Gln) amidotransferase subunit C (95 aa).

Belongs to the GatC family. As to quaternary structure, heterotrimer of A, B and C subunits.

The enzyme catalyses L-glutamyl-tRNA(Gln) + L-glutamine + ATP + H2O = L-glutaminyl-tRNA(Gln) + L-glutamate + ADP + phosphate + H(+). It carries out the reaction L-aspartyl-tRNA(Asn) + L-glutamine + ATP + H2O = L-asparaginyl-tRNA(Asn) + L-glutamate + ADP + phosphate + 2 H(+). In terms of biological role, allows the formation of correctly charged Asn-tRNA(Asn) or Gln-tRNA(Gln) through the transamidation of misacylated Asp-tRNA(Asn) or Glu-tRNA(Gln) in organisms which lack either or both of asparaginyl-tRNA or glutaminyl-tRNA synthetases. The reaction takes place in the presence of glutamine and ATP through an activated phospho-Asp-tRNA(Asn) or phospho-Glu-tRNA(Gln). In Brucella anthropi (strain ATCC 49188 / DSM 6882 / CCUG 24695 / JCM 21032 / LMG 3331 / NBRC 15819 / NCTC 12168 / Alc 37) (Ochrobactrum anthropi), this protein is Aspartyl/glutamyl-tRNA(Asn/Gln) amidotransferase subunit C.